The sequence spans 273 residues: Dermonecrotic toxin SdSicTox-betaIIB1aiii (273 aa).

Residue His-4 is part of the active site. Residues Glu-24 and Asp-26 each contribute to the Mg(2+) site. His-40 serves as the catalytic Nucleophile. Disulfide bonds link Cys-44–Cys-50 and Cys-46–Cys-189. Asp-84 provides a ligand contact to Mg(2+).

The protein belongs to the arthropod phospholipase D family. Class II subfamily. Mg(2+) serves as cofactor. As to expression, expressed by the venom gland.

It localises to the secreted. It catalyses the reaction an N-(acyl)-sphingosylphosphocholine = an N-(acyl)-sphingosyl-1,3-cyclic phosphate + choline. The catalysed reaction is an N-(acyl)-sphingosylphosphoethanolamine = an N-(acyl)-sphingosyl-1,3-cyclic phosphate + ethanolamine. The enzyme catalyses a 1-acyl-sn-glycero-3-phosphocholine = a 1-acyl-sn-glycero-2,3-cyclic phosphate + choline. It carries out the reaction a 1-acyl-sn-glycero-3-phosphoethanolamine = a 1-acyl-sn-glycero-2,3-cyclic phosphate + ethanolamine. Functionally, dermonecrotic toxins cleave the phosphodiester linkage between the phosphate and headgroup of certain phospholipids (sphingolipid and lysolipid substrates), forming an alcohol (often choline) and a cyclic phosphate. This toxin acts on sphingomyelin (SM). It may also act on ceramide phosphoethanolamine (CPE), lysophosphatidylcholine (LPC) and lysophosphatidylethanolamine (LPE), but not on lysophosphatidylserine (LPS), and lysophosphatidylglycerol (LPG). It acts by transphosphatidylation, releasing exclusively cyclic phosphate products as second products. Induces dermonecrosis, hemolysis, increased vascular permeability, edema, inflammatory response, and platelet aggregation. The sequence is that of Dermonecrotic toxin SdSicTox-betaIIB1aiii from Sicarius cf. damarensis (strain GJB-2008) (Six-eyed sand spider).